Reading from the N-terminus, the 3625-residue chain is Cubilin (3625 aa).

The first 20 residues, 1–20 (MVNNMSLLFLWSLVIFLTFA), serve as a signal peptide directing secretion. A propeptide spans 21–36 (ESYGEAGGPELQRHKR) (removed in mature form). The interaction with AMN stretch occupies residues 43–50 (PRMAAERG). The N-linked (GlcNAc...) asparagine glycan is linked to N106. The EGF-like 1 domain occupies 133–169 (DGKVCSSNPCQNGATCLNLHDSFFCICPSQWKGPLCS). Cystine bridges form between C137-C148, C142-C157, C159-C168, C175-C191, C185-C200, and C202-C211. An EGF-like 2; calcium-binding domain is found at 171 to 212 (DVNECEIYSGTPLGCQNGATCINTPGSYSCLCSPETHGPQCA). A glycan (N-linked (GlcNAc...) asparagine) is linked at N257. The 42-residue stretch at 264-305 (DRDECSSWPAPCSALVPCFNTLGSFYCGACPTGWQGNGYICE) folds into the EGF-like 3; calcium-binding domain. Intrachain disulfides connect C268–C281, C275–C290, C293–C304, C310–C325, C317–C334, C337–C348, C354–C367, C361–C377, C379–C393, C400–C410, C405–C419, C421–C430, C437–C448, C442–C457, C459–C468, C475–C501, C528–C550, C591–C617, C644–C666, and C709–C734. The EGF-like 4; calcium-binding domain occupies 306–349 (DINECEINNGGCSVAPPVECVNTPGSYYCPSCPPGYQGDGRMCT). EGF-like domains follow at residues 350–394 (LIDL…HGCV) and 396–431 (LSNV…MNCT). The N-linked (GlcNAc...) asparagine glycan is linked to N429. Residues 433-469 (NINECLSNPCLNGGTCVDGINAFSCECTRFWTGSLCH) enclose the EGF-like 7; calcium-binding domain. 27 CUB domains span residues 475–587 (CGGT…WETR), 591–703 (CGGV…YLTT), 709–816 (CGGN…YQVA), 817–928 (CGGE…FSTE), 932–1042 (CGEI…YEAT), 1045–1163 (SAGN…WDGS), 1167–1279 (CGGN…YQQT), 1280–1391 (CDNV…WLVH), 1393–1508 (CGGE…WRAV), 1512–1621 (CGGI…FRQA), 1622–1736 (CGGH…YVAS), 1740–1852 (CGGI…FNNI), 1854–1965 (GNDH…WFAM), 1980–2093 (CGGF…FHKS), 2094–2215 (CGGY…YEAK), 2219–2336 (CGGN…YSIA), 2338–2450 (CGGT…FDSS), 2454–2567 (CGGD…YTSS), 2572–2689 (CGGS…YSFT), 2691–2803 (CGGI…WNTE), 2807–2921 (CGGI…FLSR), 2922–3037 (CGRN…YRIT), 3039–3152 (CGGT…FRET), 3159–3276 (CGGY…YTLL), 3280–3397 (CGGT…IAGC), 3397–3509 (CSRE…WTSS), and 3513–3625 (CGGT…TWAS). N-linked (GlcNAc...) asparagine glycans are attached at residues N712 and N749. The cysteines at positions 761 and 779 are disulfide-linked. N781 carries an N-linked (GlcNAc...) asparagine glycan. Residues C817 and C842 are joined by a disulfide bond. N857 is a glycosylation site (N-linked (GlcNAc...) asparagine). 2 disulfides stabilise this stretch: C869–C891 and C932–C958. An N-linked (GlcNAc...) asparagine glycan is attached at N957. E980 contacts Ca(2+). N984 is a glycosylation site (N-linked (GlcNAc...) asparagine). The cysteines at positions 985 and 1005 are disulfide-linked. The Ca(2+) site is built by D988, D1027, D1029, and L1030. N-linked (GlcNAc...) asparagine glycosylation occurs at N1048. Residues E1097, D1107, and D1148 each contribute to the Ca(2+) site. C1104 and C1126 are oxidised to a cystine. C1167 and C1193 are oxidised to a cystine. N1170 carries N-linked (GlcNAc...) asparagine glycosylation. E1215 provides a ligand contact to Ca(2+). An N-linked (GlcNAc...) asparagine glycan is attached at N1219. A disulfide bridge links C1220 with C1242. Ca(2+)-binding residues include D1223, D1264, G1266, and Q1267. Cysteines 1280 and 1308 form a disulfide. N-linked (GlcNAc...) asparagine glycans are attached at residues N1287, N1309, and N1321. Ca(2+) is bound at residue E1330. N-linked (GlcNAc...) asparagine glycosylation is present at N1334. A disulfide bridge connects residues C1335 and C1353. Residues D1338, D1375, and V1377 each contribute to the Ca(2+) site. Cystine bridges form between C1393–C1419 and C1446–C1468. The N-linked (GlcNAc...) asparagine glycan is linked to N1502. C1512 and C1538 are disulfide-bonded. A glycan (N-linked (GlcNAc...) asparagine) is linked at N1553. Intrachain disulfides connect C1565/C1583, C1622/C1649, C1677/C1699, C1740/C1766, and C1793/C1814. N-linked (GlcNAc...) asparagine glycosylation is present at N1648. N-linked (GlcNAc...) asparagine glycans are attached at residues N1804, N1821, and N1887. Disulfide bonds link C1907–C1929, C1980–C2008, and C2034–C2056. N2087 and N2119 each carry an N-linked (GlcNAc...) asparagine glycan. Disulfide bonds link C2094-C2120 and C2219-C2249. The N-linked (GlcNAc...) asparagine glycan is linked to N2276. 2 disulfide bridges follow: C2277-C2299 and C2338-C2365. N-linked (GlcNAc...) asparagine glycans are attached at residues N2388 and N2402. Cystine bridges form between C2392–C2413, C2454–C2480, and C2507–C2529. N2533, N2583, N2594, and N2612 each carry an N-linked (GlcNAc...) asparagine glycan. C2572 and C2601 are disulfide-bonded. 5 disulfide bridges follow: C2630-C2651, C2691-C2717, C2744-C2766, C2807-C2833, and C2862-C2885. N-linked (GlcNAc...) asparagine glycosylation is found at N2887, N2925, N2928, and N2947. Intrachain disulfides connect C2922–C2948 and C2979–C3001. T3010 carries the phosphothreonine modification. 2 disulfide bridges follow: C3039-C3066 and C3093-C3115. N-linked (GlcNAc...) asparagine glycosylation is found at N3044, N3105, and N3127. Intrachain disulfides connect C3159/C3187 and C3217/C3239. N-linked (GlcNAc...) asparagine glycans are attached at residues N3270 and N3285. 2 cysteine pairs are disulfide-bonded: C3280–C3308 and C3334–C3356. An N-linked (GlcNAc...) asparagine glycan is attached at N3359. C3397 and C3423 are oxidised to a cystine. Residues N3432, N3459, and N3535 are each glycosylated (N-linked (GlcNAc...) asparagine). 3 cysteine pairs are disulfide-bonded: C3450/C3472, C3513/C3539, and C3566/C3588.

Interacts with AMN. Component of the cubam complex composed of one CUBN trimer and one AMN chain. The cubam complex can dimerize. Interacts with LRP2 in a dual-receptor complex in a calcium-dependent manner. Found in a complex with PID1/PCLI1, LRP1 and CUBNI. Interacts with LRP1 and PID1/PCLI1. Post-translationally, the precursor is cleaved by a trans-Golgi proteinase furin, removing a propeptide. In terms of processing, N-glycosylated. Detected in kidney cortex (at protein level).

The protein resides in the apical cell membrane. It is found in the cell membrane. Its subcellular location is the membrane. The protein localises to the coated pit. It localises to the endosome. The protein resides in the lysosome membrane. In terms of biological role, endocytic receptor which plays a role in lipoprotein, vitamin and iron metabolism by facilitating their uptake. Acts together with LRP2 to mediate endocytosis of high-density lipoproteins, GC, hemoglobin, ALB, TF and SCGB1A1. Acts together with AMN to mediate endocytosis of the CBLIF-cobalamin complex. Binds to ALB, MB, Kappa and lambda-light chains, TF, hemoglobin, GC, SCGB1A1, APOA1, high density lipoprotein, and the CBLIF-cobalamin complex. Ligand binding requires calcium. Serves as important transporter in several absorptive epithelia, including intestine, renal proximal tubules and embryonic yolk sac. May play an important role in the development of the peri-implantation embryo through internalization of APOA1 and cholesterol. Binds to LGALS3 at the maternal-fetal interface. The chain is Cubilin (CUBN) from Sus scrofa (Pig).